A 341-amino-acid chain; its full sequence is Phosphoribosylformylglycinamidine cyclo-ligase (341 aa).

It belongs to the AIR synthase family.

The protein localises to the cytoplasm. It catalyses the reaction 2-formamido-N(1)-(5-O-phospho-beta-D-ribosyl)acetamidine + ATP = 5-amino-1-(5-phospho-beta-D-ribosyl)imidazole + ADP + phosphate + H(+). The protein operates within purine metabolism; IMP biosynthesis via de novo pathway; 5-amino-1-(5-phospho-D-ribosyl)imidazole from N(2)-formyl-N(1)-(5-phospho-D-ribosyl)glycinamide: step 2/2. The sequence is that of Phosphoribosylformylglycinamidine cyclo-ligase from Xanthomonas euvesicatoria pv. vesicatoria (strain 85-10) (Xanthomonas campestris pv. vesicatoria).